We begin with the raw amino-acid sequence, 236 residues long: Rho-related GTP-binding protein RhoV (236 aa).

The interval 1 to 27 (MPPRELSEAEPPPLPASTPPPRRRSAP) is disordered. Pro residues predominate over residues 10–20 (EPPPLPASTPP). Ser25 carries the phosphoserine modification. GTP contacts are provided by residues 38–45 (GDGAVGKS), 85–89 (DTAGQ), and 143–146 (TQAD). A lipid anchor (S-palmitoyl cysteine) is attached at Cys234.

Belongs to the small GTPase superfamily. Rho family. As to quaternary structure, interacts with PAK2. Requires Mg(2+) as cofactor.

The protein resides in the cell membrane. It localises to the endosome membrane. Its function is as follows. Plays a role in the control of the actin cytoskeleton via activation of the JNK pathway. This chain is Rho-related GTP-binding protein RhoV, found in Mus musculus (Mouse).